Here is a 489-residue protein sequence, read N- to C-terminus: Betaine aldehyde dehydrogenase (489 aa).

K(+)-binding residues include Thr-26 and Asp-93. Residue 150–152 (GAW) participates in NAD(+) binding. Lys-162 serves as the catalytic Charge relay system. 176 to 179 (KPSE) provides a ligand contact to NAD(+). Val-180 lines the K(+) pocket. Residue 229-232 (GVET) participates in NAD(+) binding. Leu-245 provides a ligand contact to K(+). The active-site Proton acceptor is Glu-251. Residues Gly-253, Cys-285, and Glu-386 each contribute to the NAD(+) site. The active-site Nucleophile is the Cys-285. The residue at position 285 (Cys-285) is a Cysteine sulfenic acid (-SOH). K(+)-binding residues include Lys-456 and Gly-459. Catalysis depends on Glu-463, which acts as the Charge relay system.

Belongs to the aldehyde dehydrogenase family. Dimer of dimers. It depends on K(+) as a cofactor.

The catalysed reaction is betaine aldehyde + NAD(+) + H2O = glycine betaine + NADH + 2 H(+). The protein operates within amine and polyamine biosynthesis; betaine biosynthesis via choline pathway; betaine from betaine aldehyde: step 1/1. Functionally, involved in the biosynthesis of the osmoprotectant glycine betaine. Catalyzes the irreversible oxidation of betaine aldehyde to the corresponding acid. This is Betaine aldehyde dehydrogenase from Burkholderia ambifaria (strain ATCC BAA-244 / DSM 16087 / CCUG 44356 / LMG 19182 / AMMD) (Burkholderia cepacia (strain AMMD)).